The primary structure comprises 311 residues: Giardin subunit alpha-8 (311 aa).

4 Annexin repeats span residues 5 to 73 (RKAY…IRCW), 75 to 146 (NRHE…DRWM), 154 to 223 (NNVK…AAHY), and 227 to 295 (EPSK…SLWR).

This sequence belongs to the annexin family. Giardin subunit alpha subfamily.

It is found in the cytoplasm. The protein resides in the cytoskeleton. Giardins are involved in parasite attachment to the intestinal mucosa and in the cytoskeletal disassembly and reassembly that marks the transition from infectious trophozoite to transmissible cyst. They may interact with other cytoskeletal proteins such as microtubules in the microribbons or crossbridges, to maintain the integrity of the ventral disk. In Giardia intestinalis (Giardia lamblia), this protein is Giardin subunit alpha-8.